A 163-amino-acid chain; its full sequence is 6,7-dimethyl-8-ribityllumazine synthase (163 aa).

Residues phenylalanine 22, 56 to 58 (TFE), and 80 to 82 (AVI) each bind 5-amino-6-(D-ribitylamino)uracil. (2S)-2-hydroxy-3-oxobutyl phosphate is bound at residue 85 to 86 (GT). Histidine 88 functions as the Proton donor in the catalytic mechanism. Methionine 113 serves as a coordination point for 5-amino-6-(D-ribitylamino)uracil. Arginine 127 contacts (2S)-2-hydroxy-3-oxobutyl phosphate.

Belongs to the DMRL synthase family.

It carries out the reaction (2S)-2-hydroxy-3-oxobutyl phosphate + 5-amino-6-(D-ribitylamino)uracil = 6,7-dimethyl-8-(1-D-ribityl)lumazine + phosphate + 2 H2O + H(+). The protein operates within cofactor biosynthesis; riboflavin biosynthesis; riboflavin from 2-hydroxy-3-oxobutyl phosphate and 5-amino-6-(D-ribitylamino)uracil: step 1/2. Functionally, catalyzes the formation of 6,7-dimethyl-8-ribityllumazine by condensation of 5-amino-6-(D-ribitylamino)uracil with 3,4-dihydroxy-2-butanone 4-phosphate. This is the penultimate step in the biosynthesis of riboflavin. This chain is 6,7-dimethyl-8-ribityllumazine synthase, found in Anaeromyxobacter sp. (strain Fw109-5).